The following is a 306-amino-acid chain: Tyrosine--tRNA ligase (306 aa).

L-tyrosine contacts are provided by Tyr32 and Glu36. The short motif at 37-45 is the 'HIGH' region element; it reads PSGKIHLGH. Positions 151-158 are tyrosine; the sequence is YPIMQVND. Gln173 is a binding site for L-tyrosine. The short motif at 204–208 is the 'KMSKS' region element; it reads KMSSS. Residue Ser207 coordinates ATP. Interaction with t-RNA stretches follow at residues 228-231 and 283-288; these read KAYC and HPMDLK.

The protein belongs to the class-I aminoacyl-tRNA synthetase family. TyrS type 3 subfamily. In terms of assembly, homodimer.

Its subcellular location is the cytoplasm. It catalyses the reaction tRNA(Tyr) + L-tyrosine + ATP = L-tyrosyl-tRNA(Tyr) + AMP + diphosphate + H(+). Its function is as follows. Catalyzes the attachment of tyrosine to tRNA(Tyr) in a two-step reaction: tyrosine is first activated by ATP to form Tyr-AMP and then transferred to the acceptor end of tRNA(Tyr). In Methanocaldococcus jannaschii (strain ATCC 43067 / DSM 2661 / JAL-1 / JCM 10045 / NBRC 100440) (Methanococcus jannaschii), this protein is Tyrosine--tRNA ligase (tyrS).